Reading from the N-terminus, the 919-residue chain is MWSRHRLYFIVAGVLFHLFYLWSIFDIYFVSPLVHGMKQHQSTDEAPAKRLFLIVGDGLRADTTFDKILHPVTGEHDYLAPYIRDLVRNEATYGVSHTRMPTESRPGHVAMIAGFYEDVSAVTKGWQENPVDFDSFFNQSKHTYSFGSPDILPMFKDGATPNKVDAWMYGHEFEDFTQSSIELDAFVFRHIYELFNNTKSNKTLETEIKQDGNVFFLHLLGCDTAGHSYRPYSAEYYDNVKYIDKEVKLLVEKVHEFFDDEDTAFIFTADHGMSAFGSHGDGHPNNTRTPLVAWGAGINKPVKNQAPIFDNYTENWNLADIKRNDVNQADIASLMSYLIGANYPVNSVGELPLNFIDAPEDKKLNALFNNAKAILEQYLVKEQEIIASQFVYKEYEAFVEIPYQEYLQQIESLIERIAKGENELEPDAIKLTEELMKVTLDGLAYLTTYNWRFIRTIVTLGFLGWIVYSFSIFLRLFILNRDYNSHKSLLNYFIFGSLTIILNYVLYYQKAPFNYYMYLFFPLIFWSEIFTDRVVLDDGVKEFLKGISIPKRIILVSAIILVYESIVYAFFDRWIFSLIFNMLSFYPLICGYRDWKRNTLWFITGAAISVFTLLDAVKIESLTQINIASGLIVLTALSGFLHLRKQLNSYTTTVFICQILLVILMVLATNKSIVSLQNRTGLPRDAQVAGWVILVVSLLLMPLIHYMKPNNNYKVRMLIIFLTFAPTFIILTISFESFFYLVFSAYIVQWIEIESKLKEQTPNTSHYKQLIRVTIIGFFLLQNAFFGTGNVASISSFSLDSVYRLMPIFDPFPMGALLVIKLIIPYIILSAGLGILNLKLHIKDYTISTLIISTSDILSLNFFYLLKTEGSWLDIGITISNYCLAILSSLFMLILEIVAHVVLKNVQLSKPVIASKKTN.

The Cytoplasmic segment spans residues Met1–Tyr8. A helical transmembrane segment spans residues Phe9–Phe29. Over Val30–Thr456 the chain is Lumenal. Residues Asn138, Asn196, Asn201, Asn285, and Asn311 are each glycosylated (N-linked (GlcNAc...) asparagine). A helical membrane pass occupies residues Ile457–Phe477. The Cytoplasmic segment spans residues Ile478 to Lys487. Residues Ser488–Tyr508 traverse the membrane as a helical segment. Topologically, residues Gln509 to Lys510 are lumenal. The chain crosses the membrane as a helical span at residues Ala511–Thr531. At Asp532 to Ala558 the chain is on the cytoplasmic side. Residues Ile559–Ile579 traverse the membrane as a helical segment. Topologically, residues Phe580–Asn598 are lumenal. The chain crosses the membrane as a helical span at residues Thr599–Ile619. Residue Glu620 is a topological domain, cytoplasmic. A helical membrane pass occupies residues Ser621 to Leu641. The Lumenal segment spans residues His642 to Thr653. A helical transmembrane segment spans residues Val654–Val674. The Cytoplasmic segment spans residues Ser675–Ala686. Residues Gln687 to Met707 form a helical membrane-spanning segment. Residues Lys708–Leu718 lie on the Lumenal side of the membrane. A helical membrane pass occupies residues Ile719–Phe739. The Cytoplasmic segment spans residues Tyr740–Val773. A helical transmembrane segment spans residues Thr774–Ile794. Residues Ser795–Gly815 are Lumenal-facing. Residues Ala816 to Leu836 form a helical membrane-spanning segment. Over Asn837–Tyr845 the chain is Cytoplasmic. Residues Thr846–Leu866 form a helical membrane-spanning segment. The Lumenal portion of the chain corresponds to Lys867–Tyr882. Residues Cys883–Leu903 form a helical membrane-spanning segment. Residues Lys904 to Asn919 lie on the Cytoplasmic side of the membrane.

This sequence belongs to the PIGG/PIGN/PIGO family. PIGN subfamily.

The protein resides in the endoplasmic reticulum membrane. The protein operates within glycolipid biosynthesis; glycosylphosphatidylinositol-anchor biosynthesis. Its function is as follows. Ethanolamine phosphate transferase involved in glycosylphosphatidylinositol-anchor biosynthesis. Transfers ethanolamine phosphate to the first alpha-1,4-linked mannose of the glycosylphosphatidylinositol precursor of GPI-anchor. The protein is GPI ethanolamine phosphate transferase 1 (MCD4) of Kluyveromyces lactis (strain ATCC 8585 / CBS 2359 / DSM 70799 / NBRC 1267 / NRRL Y-1140 / WM37) (Yeast).